Here is a 497-residue protein sequence, read N- to C-terminus: Glycerol kinase (497 aa).

Threonine 12 is a binding site for ADP. Threonine 12, threonine 13, and serine 14 together coordinate ATP. Residue threonine 12 coordinates sn-glycerol 3-phosphate. Arginine 16 contacts ADP. Positions 82, 83, 134, and 243 each coordinate sn-glycerol 3-phosphate. Glycerol-binding residues include arginine 82, glutamate 83, tyrosine 134, aspartate 243, and glutamine 244. The ADP site is built by threonine 265 and glycine 308. Threonine 265, glycine 308, glutamine 312, and glycine 409 together coordinate ATP. ADP-binding residues include glycine 409 and asparagine 413.

The protein belongs to the FGGY kinase family.

The enzyme catalyses glycerol + ATP = sn-glycerol 3-phosphate + ADP + H(+). The protein operates within polyol metabolism; glycerol degradation via glycerol kinase pathway; sn-glycerol 3-phosphate from glycerol: step 1/1. Its activity is regulated as follows. Inhibited by fructose 1,6-bisphosphate (FBP). Functionally, key enzyme in the regulation of glycerol uptake and metabolism. Catalyzes the phosphorylation of glycerol to yield sn-glycerol 3-phosphate. In Nitratidesulfovibrio vulgaris (strain ATCC 29579 / DSM 644 / CCUG 34227 / NCIMB 8303 / VKM B-1760 / Hildenborough) (Desulfovibrio vulgaris), this protein is Glycerol kinase.